A 432-amino-acid chain; its full sequence is Hexuronate transporter (432 aa).

The signal sequence occupies residues 1 to 31; that stretch reads MRKIKGLRWYMIALVTLGTVLGYLTRNTVAA. Over 33–48 the chain is Periplasmic; the sequence is APTLMEELNISTQQYS. A helical membrane pass occupies residues 49 to 69; sequence YIIAAYSAAYTVMQPVAGYVL. The Cytoplasmic segment spans residues 70–75; sequence DVLGTK. A helical membrane pass occupies residues 76-96; sequence IGYAMFAVLWAVFCGATALAG. Residues 97 to 99 lie on the Periplasmic side of the membrane; that stretch reads SWG. The helical transmembrane segment at 100–120 threads the bilayer; sequence GLAVARGAVGAAEAAMIPAGL. Topologically, residues 121–138 are cytoplasmic; the sequence is KASSEWFPAKERSIAVGY. The helical transmembrane segment at 139–159 threads the bilayer; it reads FNVGSSIGAMIAPPLVVWAIV. Over 160-164 the chain is Periplasmic; that stretch reads MHSWQ. Residues 165 to 185 form a helical membrane-spanning segment; sequence MAFIISGALSFIWAMAWLIFY. At 186 to 236 the chain is on the cytoplasmic side; sequence KHPRDQKHLTDEERDYIINGQEAQHQVSTAKKMSVGQILRNRQFWGIALPR. A helical membrane pass occupies residues 237–257; the sequence is FLAEPAWGTFNAWIPLFMFKV. Residues 258–264 are Periplasmic-facing; that stretch reads YGFNLKE. The chain crosses the membrane as a helical span at residues 265 to 285; sequence IAMFAWMPMLFADLGCILGGY. The Cytoplasmic portion of the chain corresponds to 286-293; it reads LPPLFQRW. Residues 294–314 form a helical membrane-spanning segment; that stretch reads FGVNLIVSRKMVVTLGAVLMI. The Periplasmic segment spans residues 315–317; sequence GPG. The helical transmembrane segment at 318–338 threads the bilayer; the sequence is MIGLFTNPYVAIMLLCIGGFA. At 339-369 the chain is on the cytoplasmic side; the sequence is HQALSGALITLSSDVFGRNEVATANGLTGMS. The chain crosses the membrane as a helical span at residues 370–390; that stretch reads AWLASTLFALVVGALADTIGF. Serine 391 is a topological domain (periplasmic). Residues 392-412 traverse the membrane as a helical segment; that stretch reads PLFAVLAVFDLLGALVIWTVL. The Cytoplasmic portion of the chain corresponds to 413 to 432; it reads QNKPAIEVAQETHNDPAPQH.

This sequence belongs to the major facilitator superfamily. Phthalate permease family.

The protein localises to the cell inner membrane. The enzyme catalyses aldehydo-D-glucuronate(in) + H(+)(in) = aldehydo-D-glucuronate(out) + H(+)(out). It catalyses the reaction aldehydo-D-galacturonate(out) + H(+)(out) = aldehydo-D-galacturonate(in) + H(+)(in). Its function is as follows. Transport of aldohexuronates such as D-glucuronate and D-galacturonate. This is Hexuronate transporter (exuT) from Escherichia coli O157:H7.